A 529-amino-acid chain; its full sequence is Endoglucanase 21 (529 aa).

The first 24 residues, 1–24, serve as a signal peptide directing secretion; sequence MVAAMTMCAAVAVLLVLTSTMAAA. Asp-89 acts as the Nucleophile in catalysis. Residue Asn-342 is glycosylated (N-linked (GlcNAc...) asparagine). Catalysis depends on residues His-429, Asp-481, and Glu-490.

The protein belongs to the glycosyl hydrolase 9 (cellulase E) family. As to expression, expressed in roots and flowers.

The protein localises to the secreted. It carries out the reaction Endohydrolysis of (1-&gt;4)-beta-D-glucosidic linkages in cellulose, lichenin and cereal beta-D-glucans.. This chain is Endoglucanase 21 (GLU9), found in Oryza sativa subsp. japonica (Rice).